The chain runs to 446 residues: Probable polyamine aminopropyl transferase (446 aa).

The segment at 1–117 (MVEPAIGRNH…KRIACVVSAV (117 aa)) is unknown. The disordered stretch occupies residues 64-94 (GRGAERWHRSPRQANGRFSNQRYSSTSPNSS). The span at 75-94 (RQANGRFSNQRYSSTSPNSS) shows a compositional bias: polar residues. The 236-residue stretch at 116-351 (AVIFVATSCV…ELFAKKPGSG (236 aa)) folds into the PABS domain. The spermidine synthase stretch occupies residues 118–353 (IFVATSCVSP…FAKKPGSGSE (236 aa)). S-methyl-5'-thioadenosine is bound by residues Asn-147, Glu-226, and 251-252 (DG). The active-site Proton acceptor is the Asp-269.

Belongs to the spermidine/spermine synthase family. As to quaternary structure, homodimer or homotetramer.

The protein resides in the cytoplasm. It carries out the reaction S-adenosyl 3-(methylsulfanyl)propylamine + putrescine = S-methyl-5'-thioadenosine + spermidine + H(+). The protein operates within amine and polyamine biosynthesis; spermidine biosynthesis; spermidine from putrescine: step 1/1. In terms of biological role, catalyzes the irreversible transfer of a propylamine group from the amino donor S-adenosylmethioninamine (decarboxy-AdoMet) to putrescine (1,4-diaminobutane) to yield spermidine. This is Probable polyamine aminopropyl transferase (speE) from Bifidobacterium longum (strain NCC 2705).